Consider the following 500-residue polypeptide: Nucleolar and spindle-associated protein 1 (500 aa).

4 disordered regions span residues 48–204 (KNET…NFKK), 241–299 (TKKS…ASKS), 319–353 (VRFS…PESE), and 365–500 (ELLP…VPVK). Positions 82–92 (THRRGRGRKPI) are enriched in basic residues. A compositionally biased stretch (polar residues) spans 113 to 127 (NMASSIDRTQQQNCT). Residues 264 to 274 (SRLSLLSPLPR) show a composition bias toward low complexity. The segment covering 276–298 (TGASPSRTPMSQRRSCRSSTASK) has biased composition (polar residues). A compositionally biased stretch (basic and acidic residues) spans 323-332 (EATKDNEHKR). Residues 380-392 (ITLNTTTQPSPAT) show a composition bias toward polar residues. The span at 442-451 (PWGESKENKP) shows a compositional bias: basic and acidic residues. Residues 452 to 469 (DPNSNVSVLKNNYKQPHL) show a composition bias toward polar residues.

This sequence belongs to the NUSAP family. In terms of assembly, interacts with DNA, microtubules, ipo7, kpna2 and kpnb1. Microtubule stabilization is inhibited by ipo7 and kpna2, while microtubule bundling is inhibited by kpnb1. Active GTP-bound ran causes dissociation of ipo7 and kpnb1.

It is found in the cytoplasm. It localises to the nucleus. Its subcellular location is the cytoskeleton. The protein resides in the spindle. In terms of biological role, microtubule-associated protein with the capacity to bundle and stabilize microtubules. May associate with chromosomes and promote the organization of meiotic or mitotic spindle microtubules around them. This is Nucleolar and spindle-associated protein 1 (nusap1) from Xenopus tropicalis (Western clawed frog).